The sequence spans 104 residues: Large ribosomal subunit protein uL24 (104 aa).

Belongs to the universal ribosomal protein uL24 family. As to quaternary structure, part of the 50S ribosomal subunit. Post-translationally, a methylated and unmethylated form are thought to exist.

Its function is as follows. One of two assembly initiator proteins, it binds directly to the 5'-end of the 23S rRNA, where it nucleates assembly of the 50S subunit. One of the proteins that surrounds the polypeptide exit tunnel on the outside of the subunit. The chain is Large ribosomal subunit protein uL24 from Rhodopseudomonas palustris (strain ATCC BAA-98 / CGA009).